Consider the following 125-residue polypeptide: uncharacterized protein (125 aa).

Its subcellular location is the plastid. It localises to the chloroplast. This is an uncharacterized protein from Guillardia theta (Cryptophyte).